We begin with the raw amino-acid sequence, 516 residues long: Cysteine--tRNA ligase (516 aa).

Residue C32 coordinates Zn(2+). Positions 34–44 match the 'HIGH' region motif; sequence PTVYMYAHIGN. Zn(2+) contacts are provided by C230, H255, and E259. The 'KMSKS' region signature appears at 287-291; that stretch reads KMSKS. An ATP-binding site is contributed by K290.

Belongs to the class-I aminoacyl-tRNA synthetase family. In terms of assembly, monomer. The cofactor is Zn(2+).

Its subcellular location is the cytoplasm. It carries out the reaction tRNA(Cys) + L-cysteine + ATP = L-cysteinyl-tRNA(Cys) + AMP + diphosphate. The polypeptide is Cysteine--tRNA ligase (Salinibacter ruber (strain DSM 13855 / M31)).